Here is a 540-residue protein sequence, read N- to C-terminus: Chaperonin GroEL (540 aa).

Residues 29-32, 86-90, Gly413, 476-478, and Asp492 contribute to the ATP site; these read TIGP, DGTTT, and NAA.

It belongs to the chaperonin (HSP60) family. Forms a cylinder of 14 subunits composed of two heptameric rings stacked back-to-back. Interacts with the co-chaperonin GroES.

It is found in the cytoplasm. It catalyses the reaction ATP + H2O + a folded polypeptide = ADP + phosphate + an unfolded polypeptide.. Together with its co-chaperonin GroES, plays an essential role in assisting protein folding. The GroEL-GroES system forms a nano-cage that allows encapsulation of the non-native substrate proteins and provides a physical environment optimized to promote and accelerate protein folding. This is Chaperonin GroEL from Staphylococcus carnosus (strain TM300).